Reading from the N-terminus, the 257-residue chain is 1-(5-phosphoribosyl)-5-[(5-phosphoribosylamino)methylideneamino] imidazole-4-carboxamide isomerase (257 aa).

Asp-8 functions as the Proton acceptor in the catalytic mechanism. Asp-129 serves as the catalytic Proton donor.

Belongs to the HisA/HisF family.

Its subcellular location is the cytoplasm. The enzyme catalyses 1-(5-phospho-beta-D-ribosyl)-5-[(5-phospho-beta-D-ribosylamino)methylideneamino]imidazole-4-carboxamide = 5-[(5-phospho-1-deoxy-D-ribulos-1-ylimino)methylamino]-1-(5-phospho-beta-D-ribosyl)imidazole-4-carboxamide. It functions in the pathway amino-acid biosynthesis; L-histidine biosynthesis; L-histidine from 5-phospho-alpha-D-ribose 1-diphosphate: step 4/9. This Rippkaea orientalis (strain PCC 8801 / RF-1) (Cyanothece sp. (strain PCC 8801)) protein is 1-(5-phosphoribosyl)-5-[(5-phosphoribosylamino)methylideneamino] imidazole-4-carboxamide isomerase.